A 235-amino-acid polypeptide reads, in one-letter code: Phosphoribosylaminoimidazole-succinocarboxamide synthase (235 aa).

This sequence belongs to the SAICAR synthetase family.

The catalysed reaction is 5-amino-1-(5-phospho-D-ribosyl)imidazole-4-carboxylate + L-aspartate + ATP = (2S)-2-[5-amino-1-(5-phospho-beta-D-ribosyl)imidazole-4-carboxamido]succinate + ADP + phosphate + 2 H(+). It functions in the pathway purine metabolism; IMP biosynthesis via de novo pathway; 5-amino-1-(5-phospho-D-ribosyl)imidazole-4-carboxamide from 5-amino-1-(5-phospho-D-ribosyl)imidazole-4-carboxylate: step 1/2. In Streptococcus pneumoniae (strain 70585), this protein is Phosphoribosylaminoimidazole-succinocarboxamide synthase.